The sequence spans 345 residues: Fe-S cluster assembly protein DRE2 (345 aa).

The N-terminal SAM-like domain stretch occupies residues 11–166; sequence FSHSSNGVVL…SIGSSSGSSS (156 aa). The interval 147-166 is disordered; the sequence is SKPATASSSFSIGSSSGSSS. Residues 153-166 show a composition bias toward low complexity; sequence SSSFSIGSSSGSSS. The tract at residues 167–210 is linker; the sequence is ALPLRRKLGSGASANAKKSLWATQPASANDLIDEASLLRDADFV. The [2Fe-2S] cluster site is built by Cys-220, Cys-233, Cys-236, and Cys-238. The interval 220–238 is fe-S binding site A; sequence CDVGAGQGKKKKACKGCTC. [4Fe-4S] cluster is bound by residues Cys-307, Cys-310, Cys-318, and Cys-321. 2 consecutive short sequence motifs (cx2C motif) follow at residues 307–310 and 318–321; these read CGSC and CSSC. A fe-S binding site B region spans residues 307–321; the sequence is CGSCFLGDAFRCSSC.

Belongs to the anamorsin family. As to quaternary structure, monomer. Interacts with TAH18. Interacts with MIA40. [2Fe-2S] cluster is required as a cofactor. The cofactor is [4Fe-4S] cluster.

It is found in the cytoplasm. It localises to the mitochondrion intermembrane space. Its function is as follows. Component of the cytosolic iron-sulfur (Fe-S) protein assembly (CIA) machinery required for the maturation of extramitochondrial Fe-S proteins. Part of an electron transfer chain functioning in an early step of cytosolic Fe-S biogenesis, facilitating the de novo assembly of a [4Fe-4S] cluster on the scaffold complex CFD1-NBP35. Electrons are transferred to DRE2 from NADPH via the FAD- and FMN-containing protein TAH18. TAH18-DRE2 are also required for the assembly of the diferric tyrosyl radical cofactor of ribonucleotide reductase (RNR), probably by providing electrons for reduction during radical cofactor maturation in the catalytic small subunit RNR2. The protein is Fe-S cluster assembly protein DRE2 of Mycosarcoma maydis (Corn smut fungus).